Here is a 307-residue protein sequence, read N- to C-terminus: Mitochondrial brown fat uncoupling protein 1 (307 aa).

Residues 2 to 10 (VNPTTSEVH) are Mitochondrial intermembrane-facing. Residues 11–32 (PTMGVKIFSAGVAACLADIITF) form a helical membrane-spanning segment. Solcar repeat units follow at residues 11–102 (PTMG…VQEY), 111–201 (PTLG…MKGA), and 210–295 (DDVP…LKKE). Residues 33–73 (PLDTAKVRLQIQGEGQISSTIRYKGVLGTITTLAKTEGLPK) are Mitochondrial matrix-facing. Residue K56 coordinates fatty acid 16:0. A helical membrane pass occupies residues 74–96 (LYSGLPAGIQRQISFASLRIGLY). The Mitochondrial intermembrane portion of the chain corresponds to 97–116 (DTVQEYFSSGKETPPTLGNR). Residues 117–133 (ISAGLMTGGVAVFIGQP) form a helical membrane-spanning segment. Over 134–178 (TEVVKVRLQAQSHLHGIKPRYTGTYNAYRIIATTESFSTLWKGTT) the chain is Mitochondrial matrix. The chain crosses the membrane as a helical span at residues 179 to 195 (PNLLRNVIINCVELVTY). Topologically, residues 196 to 212 (DLMKGALVNNQILADDV) are mitochondrial intermembrane. Residues 213–232 (PCHLLSAFVAGFCTTFLASP) form a helical membrane-spanning segment. Residues 233-266 (ADVVKTRFINSLPGQYPSVPSCAMTMLTKEGPTA) lie on the Mitochondrial matrix side of the membrane. Residue C254 is modified to Cysteine sulfenic acid (-SOH). The chain crosses the membrane as a helical span at residues 267–289 (FFKGFVPSFLRLASWNVIMFVCF). Residue K269 participates in fatty acid 16:0 binding. At 290–307 (EQLKKELSKSRQTVDCTT) the chain is on the mitochondrial intermembrane side.

It belongs to the mitochondrial carrier (TC 2.A.29) family. Most probably functions as a monomer. Binds one purine nucleotide per monomer. However, has also been suggested to function as a homodimer or a homotetramer. Tightly associates with cardiolipin in the mitochondrion inner membrane; may stabilize and regulate its activity. May undergo sulfenylation upon cold exposure. May increase the sensitivity of UCP1 thermogenic function to the activation by noradrenaline probably through structural effects. In terms of processing, may undergo ubiquitin-mediated proteasomal degradation. Brown adipose tissue.

The protein resides in the mitochondrion inner membrane. It catalyses the reaction H(+)(in) = H(+)(out). Its activity is regulated as follows. Has no constitutive proton transporter activity and has to be activated by long-chain fatty acids/LCFAs. Inhibited by purine nucleotides. Both purine nucleotides and LCFAs bind the cytosolic side of the transporter and directly compete to activate or inhibit it. Activated by noradrenaline and reactive oxygen species. Despite lacking canonical translational encoding for selenocysteine, a small pool of the protein has been observed to selectively incorporate selenocysteine at 'Cys-254'. Selenocysteine-modified protein is highly sensitive to redox modification and may constitute a pool of protein highly sensitive to activation by elevated levels of reactive oxygen species (ROS). In terms of biological role, mitochondrial protein responsible for thermogenic respiration, a specialized capacity of brown adipose tissue and beige fat that participates in non-shivering adaptive thermogenesis to temperature and diet variations and more generally to the regulation of energy balance. Functions as a long-chain fatty acid/LCFA and proton symporter, simultaneously transporting one LCFA and one proton through the inner mitochondrial membrane. However, LCFAs remaining associated with the transporter via their hydrophobic tails, it results in an apparent transport of protons activated by LCFAs. Thereby, dissipates the mitochondrial proton gradient and converts the energy of substrate oxydation into heat instead of ATP. Regulates the production of reactive oxygen species/ROS by mitochondria. The sequence is that of Mitochondrial brown fat uncoupling protein 1 from Mesocricetus auratus (Golden hamster).